Consider the following 205-residue polypeptide: 3-isopropylmalate dehydratase small subunit (205 aa).

The protein belongs to the LeuD family. LeuD type 1 subfamily. In terms of assembly, heterodimer of LeuC and LeuD.

It catalyses the reaction (2R,3S)-3-isopropylmalate = (2S)-2-isopropylmalate. It participates in amino-acid biosynthesis; L-leucine biosynthesis; L-leucine from 3-methyl-2-oxobutanoate: step 2/4. Catalyzes the isomerization between 2-isopropylmalate and 3-isopropylmalate, via the formation of 2-isopropylmaleate. The protein is 3-isopropylmalate dehydratase small subunit of Christiangramia forsetii (strain DSM 17595 / CGMCC 1.15422 / KT0803) (Gramella forsetii).